The sequence spans 300 residues: ClpXP adapter protein SpxH (300 aa).

The protein belongs to the SpxH family. In terms of assembly, interacts with Spx.

The protein resides in the cytoplasm. Functionally, adapter protein required for efficient degradation of Spx by ClpXP under non-stress conditions. Interaction with Spx stabilizes Spx and exposes the C-terminus of Spx for recognition and proteolysis by ClpXP. This chain is ClpXP adapter protein SpxH, found in Bacillus licheniformis (strain ATCC 14580 / DSM 13 / JCM 2505 / CCUG 7422 / NBRC 12200 / NCIMB 9375 / NCTC 10341 / NRRL NRS-1264 / Gibson 46).